Reading from the N-terminus, the 117-residue chain is Large ribosomal subunit protein bL20 (117 aa).

This sequence belongs to the bacterial ribosomal protein bL20 family.

Its function is as follows. Binds directly to 23S ribosomal RNA and is necessary for the in vitro assembly process of the 50S ribosomal subunit. It is not involved in the protein synthesizing functions of that subunit. This is Large ribosomal subunit protein bL20 from Actinobacillus succinogenes (strain ATCC 55618 / DSM 22257 / CCUG 43843 / 130Z).